Reading from the N-terminus, the 906-residue chain is ATP-dependent DNA helicase PIF1 (906 aa).

Disordered stretches follow at residues 77-146 (DSEI…SSTF) and 229-297 (LEGS…PFKV). Basic and acidic residues predominate over residues 78–87 (SEIKESDDLS). Residues 88-119 (KGQSHVYNGSPVTKNSILQIEKQQIQKSPRPT) show a composition bias toward polar residues. Residues 120 to 132 (ETNKRMQIRKDPD) show a composition bias toward basic and acidic residues. Polar residues predominate over residues 234 to 261 (NKVQADNASPFRITSSFSSPSQIQNQGV). Over residues 273–291 (QNVSSASQSSSPPMTVSQV) the composition is skewed to low complexity. 390–397 (GSAGTGKS) is a binding site for ATP. A DNA-binding region spans residues 840–859 (QAYVALSRAVSRAGLQVLNF).

This sequence belongs to the helicase family. PIF1 subfamily. As to quaternary structure, monomer. Interacts with telomerase. It depends on Mg(2+) as a cofactor.

The protein resides in the nucleus. It is found in the mitochondrion. It carries out the reaction Couples ATP hydrolysis with the unwinding of duplex DNA at the replication fork by translocating in the 5'-3' direction. This creates two antiparallel DNA single strands (ssDNA). The leading ssDNA polymer is the template for DNA polymerase III holoenzyme which synthesizes a continuous strand.. The catalysed reaction is ATP + H2O = ADP + phosphate + H(+). DNA-dependent ATPase and 5'-3' DNA helicase required for the maintenance of both mitochondrial and nuclear genome stability. Efficiently unwinds G-quadruplex (G4) DNA structures and forked RNA-DNA hybrids. Resolves G4 structures, preventing replication pausing and double-strand breaks (DSBs) at G4 motifs. Involved in the maintenance of telomeric DNA. Inhibits telomere elongation, de novo telomere formation and telomere addition to DSBs via catalytic inhibition of telomerase. Reduces the processivity of telomerase by displacing active telomerase from DNA ends. Releases telomerase by unwinding the short telomerase RNA/telomeric DNA hybrid that is the intermediate in the telomerase reaction. Involved in the maintenance of ribosomal (rDNA). Required for efficient fork arrest at the replication fork barrier within rDNA. Involved in the maintenance of mitochondrial (mtDNA). Required to maintain mtDNA under conditions that introduce dsDNA breaks in mtDNA, either preventing or repairing dsDNA breaks. May inhibit replication progression to allow time for repair. May have a general role in chromosomal replication by affecting Okazaki fragment maturation. May have a role in conjunction with DNA2 helicase/nuclease in 5'-flap extension during Okazaki fragment processing. In Candida albicans (strain SC5314 / ATCC MYA-2876) (Yeast), this protein is ATP-dependent DNA helicase PIF1.